Here is a 632-residue protein sequence, read N- to C-terminus: Extracellular metalloproteinase 2 (632 aa).

The first 19 residues, 1–19 (MHGLLLAGLAAALPLGVAG), serve as a signal peptide directing secretion. Positions 20–244 (LPARQQSGLS…VHNVVDYVAS (225 aa)) are excised as a propeptide. Asn270 is a glycosylation site (N-linked (GlcNAc...) asparagine). Position 429 (His429) interacts with Zn(2+). Residue Glu430 is part of the active site. A Zn(2+)-binding site is contributed by His433.

Belongs to the peptidase M36 family. The cofactor is Zn(2+).

It is found in the secreted. Functionally, secreted metalloproteinase probably acting as a virulence factor. The chain is Extracellular metalloproteinase 2 (MEP2) from Trichophyton tonsurans (Scalp ringworm fungus).